The sequence spans 105 residues: Protein METHYLENE BLUE SENSITIVITY 1 (105 aa).

A disordered region spans residues 26–46 (RGGGKAGIADRTGKEKGGHAK). The segment covering 36–46 (RTGKEKGGHAK) has biased composition (basic and acidic residues).

As to expression, mainly expressed in the epidermis.

Its subcellular location is the nucleus. The protein localises to the cytoplasm. It is found in the stress granule. Functionally, required for acclimation to reactive oxygen species (ROS) responses downstream of beta-cyclocitral (beta-cc) or mediated by dihydroactinidiolide, including singlet oxygen 1O(2) detoxification reactions, especially upon light-mediated photooxidative stress, and leading to programmed cell death. Prevents leaf senescence. Involved in cold acclimation. In Arabidopsis thaliana (Mouse-ear cress), this protein is Protein METHYLENE BLUE SENSITIVITY 1.